We begin with the raw amino-acid sequence, 122 residues long: Serum amyloid A-1 protein (122 aa).

Residues 1–18 (MKLLTGLVFCSLVLGVSS) form the signal peptide. The important for amyloid formation; forms amyloid fibrils in vitro stretch occupies residues 19–45 (RSFFSFLGEAFDGARDMWRAYSDMREA). The propeptide at 95–122 (LADQAANEWGRSGKDPNHFRPAGLPEKY) is often cleaved during amyloidogenesis. Residues 98-122 (QAANEWGRSGKDPNHFRPAGLPEKY) are disordered. N101 is subject to N4,N4-dimethylasparagine.

The protein belongs to the SAA family. In terms of assembly, homohexamer; dimer of trimers. Can form amyloid fibrils after partial proteolysis; the native, undenatured protein does not form amyloid fibrils (in vitro). Apolipoprotein of the HDL complex. Binds to heparin. In terms of processing, this protein is the precursor of amyloid protein A, which is formed by the removal of approximately 24 residues from the C-terminal end. In terms of tissue distribution, expressed by the liver; secreted in plasma (at protein level).

The protein resides in the secreted. Functionally, major acute phase protein. The sequence is that of Serum amyloid A-1 protein (SAA1) from Homo sapiens (Human).